The following is a 329-amino-acid chain: Malate dehydrogenase (329 aa).

11 to 17 is a binding site for NAD(+); that stretch reads GAAGQIG. Residues Arg92 and Arg98 each contribute to the substrate site. NAD(+) is bound by residues Asn105, Gln112, and 129-131; that span reads VGN. Residues Asn131 and Arg165 each contribute to the substrate site. The active-site Proton acceptor is the His190.

Belongs to the LDH/MDH superfamily. MDH type 2 family.

It carries out the reaction (S)-malate + NAD(+) = oxaloacetate + NADH + H(+). Its function is as follows. Catalyzes the reversible oxidation of malate to oxaloacetate. In Laribacter hongkongensis (strain HLHK9), this protein is Malate dehydrogenase.